A 143-amino-acid chain; its full sequence is MRGTMTRVMATGTFDILHPGHLLYLERSRALGDELVVVVARDINVKHKPRPVVPEDQRLRMVSALKMVDMAVLGSVTDIFEPVRALRPDIITLGYDQYMDENWLEGELRKRGLMARVVRISEREPCELCSSRQIVEKILKERC.

Residues 13–14, 18–21, and Asp96 contribute to the ATP site; these read TF and HPGH.

It belongs to the archaeal FAD synthase family. Homodimer. It depends on a divalent metal cation as a cofactor.

It carries out the reaction FMN + ATP + H(+) = FAD + diphosphate. It functions in the pathway cofactor biosynthesis; FAD biosynthesis; FAD from FMN: step 1/1. Its function is as follows. Catalyzes the transfer of the AMP portion of ATP to flavin mononucleotide (FMN) to produce flavin adenine dinucleotide (FAD) coenzyme. In Methanothrix thermoacetophila (strain DSM 6194 / JCM 14653 / NBRC 101360 / PT) (Methanosaeta thermophila), this protein is FAD synthase.